Here is a 293-residue protein sequence, read N- to C-terminus: Protease HtpX (293 aa).

2 helical membrane-spanning segments follow: residues 4–24 and 34–54; these read IALF…VLSL and GLMI…LLMS. Residue His-139 participates in Zn(2+) binding. Glu-140 is a catalytic residue. His-143 serves as a coordination point for Zn(2+). Helical transmembrane passes span 158 to 178 and 193 to 213; these read VVNT…AGFM and LIYF…ASII. Glu-222 contributes to the Zn(2+) binding site.

This sequence belongs to the peptidase M48B family. Requires Zn(2+) as cofactor.

It localises to the cell inner membrane. The sequence is that of Protease HtpX from Escherichia coli (strain ATCC 8739 / DSM 1576 / NBRC 3972 / NCIMB 8545 / WDCM 00012 / Crooks).